The primary structure comprises 304 residues: Caspase-6 (304 aa).

The segment at 1-29 (MSGAERRPAAGRVQLDSKPTPTTTADGNQ) is disordered. Residues 1-35 (MSGAERRPAAGRVQLDSKPTPTTTADGNQNITEVD) constitute a propeptide that is removed on maturation. Residues 17–29 (SKPTPTTTADGNQ) show a composition bias toward polar residues. The tri-arginine exosite stretch occupies residues 54-56 (QRR). The active site involves histidine 133. Residues 137–154 (DHVYAYDAQIKIETITNM) form a 130's region region. Residue cysteine 175 is part of the active site. The propeptide occupies 192–204 (SKDETTVNQTEVD).

This sequence belongs to the peptidase C14A family. Heterotetramer that consists of two anti-parallel arranged heterodimers, each one formed by a 18 kDa (p18) and a 11 kDa (p11) subunit. In terms of assembly, heterotetramer that consists of two anti-parallel arranged heterodimers, each one formed by a 18 kDa (Caspase-6 subunit p18) and a 11 kDa (Caspase-6 subunit p11) subunit. In terms of tissue distribution, widely expressed.

The protein resides in the cytoplasm. It localises to the nucleus. The catalysed reaction is Strict requirement for Asp at position P1 and has a preferred cleavage sequence of Val-Glu-His-Asp-|-.. During activation, the N-terminal prodomain is removed by cleavage. Concomitantly, double cleavage gives rise to a large 18-kDa and a small 11-kDa subunit. The two large and two small subunits then assemble to form the active CASP6 complex. Intramolecular cleavage at Asp-191 is a prerequisite for CASP6 self-activation. In terms of biological role, cysteine protease that plays essential roles in programmed cell death, development and innate immunity. Acts as a non-canonical executioner caspase during apoptosis: localizes in the nucleus and cleaves the nuclear structural protein lamin-A/LMNA thereby inducing nuclear shrinkage and fragmentation. Lamin-A/LMNA cleavage is required for chromatin condensation and nuclear disassembly during apoptotic execution. Plays an essential role in defense against viruses by acting as a central mediator of the ZBP1-mediated pyroptosis, apoptosis, and necroptosis (PANoptosis), independently of its cysteine protease activity. PANoptosis is a unique inflammatory programmed cell death, which provides a molecular scaffold that allows the interactions and activation of machinery required for inflammasome/pyroptosis, apoptosis and necroptosis. This chain is Caspase-6, found in Gallus gallus (Chicken).